Here is a 317-residue protein sequence, read N- to C-terminus: uncharacterized protein (317 aa).

Residues 1–60 enclose the HTH lysR-type domain; it reads MKHELSSMKAFVILAESSSFNNAAKLLNITQPALTRRIKKMEEDLHVQLFERTTRKVTLT. The segment at residues 20–40 is a DNA-binding region (H-T-H motif); the sequence is FNNAAKLLNITQPALTRRIKK.

The protein belongs to the LysR transcriptional regulatory family.

This is an uncharacterized protein from Escherichia coli (strain K12).